The chain runs to 315 residues: Thymidylate synthase (315 aa).

Residues Arg-29 and 156-157 contribute to the dUMP site; that span reads RR. The Nucleophile role is filled by Cys-176. DUMP contacts are provided by residues 213-216, Asn-224, and 254-256; these read RSCD and HVY. Asp-216 lines the (6R)-5,10-methylene-5,6,7,8-tetrahydrofolate pocket.

This sequence belongs to the thymidylate synthase family. In terms of assembly, homodimer.

The catalysed reaction is dUMP + (6R)-5,10-methylene-5,6,7,8-tetrahydrofolate = 7,8-dihydrofolate + dTMP. It participates in pyrimidine metabolism; dTTP biosynthesis. The chain is Thymidylate synthase (TMP1) from Candida albicans (strain SC5314 / ATCC MYA-2876) (Yeast).